Consider the following 76-residue polypeptide: Small ribosomal subunit protein bS18 (76 aa).

Belongs to the bacterial ribosomal protein bS18 family. As to quaternary structure, part of the 30S ribosomal subunit. Forms a tight heterodimer with protein bS6.

In terms of biological role, binds as a heterodimer with protein bS6 to the central domain of the 16S rRNA, where it helps stabilize the platform of the 30S subunit. This Alkaliphilus metalliredigens (strain QYMF) protein is Small ribosomal subunit protein bS18.